Consider the following 65-residue polypeptide: DNA-directed RNA polymerase subunit Rpo10 (65 aa).

Zn(2+) contacts are provided by cysteine 7, cysteine 10, cysteine 44, and cysteine 45.

This sequence belongs to the archaeal Rpo10/eukaryotic RPB10 RNA polymerase subunit family. Part of the RNA polymerase complex. It depends on Zn(2+) as a cofactor.

Its subcellular location is the cytoplasm. It carries out the reaction RNA(n) + a ribonucleoside 5'-triphosphate = RNA(n+1) + diphosphate. Functionally, DNA-dependent RNA polymerase (RNAP) catalyzes the transcription of DNA into RNA using the four ribonucleoside triphosphates as substrates. This is DNA-directed RNA polymerase subunit Rpo10 from Pyrobaculum arsenaticum (strain DSM 13514 / JCM 11321 / PZ6).